Here is a 67-residue protein sequence, read N- to C-terminus: Conotoxin mr3d (67 aa).

Positions 1-19 are cleaved as a signal peptide; sequence MSKLGILLTICLLLFPLTA. The propeptide occupies 20 to 52; it reads VPLDGDQPADRPAERMQDDISSEHHPFFDPVKR. Disulfide bonds link Cys53/Cys65, Cys54/Cys62, and Cys58/Cys66. The residue at position 64 (Pro64) is a 4-hydroxyproline; partial. Position 66 is a cysteine amide; partial (Cys66).

This sequence belongs to the conotoxin M superfamily. Has been found to be hydroxylated and amidated by Han et al. (2006), and to be unmodified by Ju et al. (2022). In terms of tissue distribution, expressed by the venom duct.

It is found in the secreted. This chain is Conotoxin mr3d, found in Conus marmoreus (Marble cone).